The chain runs to 187 residues: Protein McbG (187 aa).

Belongs to the pentapeptide repeat protein family.

In terms of biological role, together with proteins McbE and McbF this protein causes immunity to the peptide antibiotic microcin B17 (MccB17), which inhibits DNA replication in Enterobacteriaceae by induction of the SOS repair system. McbG alone can provide some protection. The polypeptide is Protein McbG (mcbG) (Escherichia coli).